We begin with the raw amino-acid sequence, 370 residues long: Fe(2+) transport protein 2 (370 aa).

The signal sequence occupies residues 1-25 (MMMSSSQTPVRIAFVFLVILAATDA). Residues 26–55 (HSDHRTPPPACGGAAVGGECHSVARALRLK) lie on the Extracellular side of the membrane. The chain crosses the membrane as a helical span at residues 56 to 76 (LIAIPAILAASVAGVCLPLFA). Topologically, residues 77 to 85 (RSVPALRPD) are cytoplasmic. Residues 86-106 (GGLFAVVKAFASGVILGTGYM) traverse the membrane as a helical segment. The Extracellular portion of the chain corresponds to 107–130 (HVLPDSFNDLTSPCLPRKPWSEFP). Residues 131–151 (FAAFVAMLAAVFTLMVDSLML) traverse the membrane as a helical segment. The Cytoplasmic segment spans residues 152 to 215 (TFHTRGSKGR…TTKAQLLRNR (64 aa)). The helical transmembrane segment at 216–236 (VIVQVLEMGIVVHSVVIGLGM) threads the bilayer. Over 237–247 (GASQNVCTIRP) the chain is Extracellular. Residues 248–268 (LVAALCFHQMFEGMGLGGCIL) traverse the membrane as a helical segment. At 269 to 278 (QAGYGGRTRS) the chain is on the cytoplasmic side. The chain crosses the membrane as a helical span at residues 279-299 (ALVFFFSTTTPFGIALGLALT). Topologically, residues 300 to 309 (RVYSDSSPTA) are extracellular. The helical transmembrane segment at 310–330 (LVVVGLLNAASAGLLHYMALV) threads the bilayer. The Cytoplasmic portion of the chain corresponds to 331 to 349 (ELLAADFMGPKLQGNVRLQ). The chain crosses the membrane as a helical span at residues 350 to 370 (LAASLAILLGAGGMSVMAKWA).

The protein belongs to the ZIP transporter (TC 2.A.5) family.

It is found in the cell membrane. Its function is as follows. Iron transporter that may play a role in the uptake of iron from the rhizosphere across the plasma membrane in the root epidermal layer. The protein is Fe(2+) transport protein 2 (IRT2) of Oryza sativa subsp. japonica (Rice).